The chain runs to 1905 residues: Low-density lipoprotein receptor-related protein 4 (1905 aa).

The signal sequence occupies residues 1-20 (MRRQWGALLLGALLCAHGLA). At 21–1725 (SSPECACGRS…AAPGEGLHIS (1705 aa)) the chain is on the extracellular side. LDL-receptor class A domains are found at residues 26–67 (ACGR…DGCI), 70–106 (TCSP…QDCP), 109–144 (ECEE…EQCD), 147–183 (KCSD…ENCP), 190–226 (PCNL…SDCS), 230–266 (PCRS…RNCT), 269–305 (MCTA…ENCE), and 311–350 (QCAL…QNCR). 30 disulfides stabilise this stretch: C27–C44, C34–C57, C51–C66, C71–C83, C78–C96, C90–C105, C110–C122, C117–C135, C129–C143, C148–C160, C155–C173, C167–C182, C191–C203, C198–C216, C210–C225, C231–C243, C238–C256, C250–C265, C270–C282, C277–C295, C289–C304, C312–C324, C319–C337, C331–C349, C358–C369, C365–C378, C380–C393, C399–C409, C405–C418, and C420–C433. N264 carries an N-linked (GlcNAc...) asparagine glycan. In terms of domain architecture, EGF-like 1; calcium-binding spans 354-394 (GEENCNVNNGGCAQKCQMVRGAVQCTCHTGYRLTEDGHTCQ). Residues 395–434 (DVNECAEEGYCSQGCTNSEGAFQCWCETGYELRPDRRSCK) form the EGF-like 2; calcium-binding domain. LDL-receptor class B repeat units follow at residues 480 to 522 (ELVF…DWVH), 523 to 565 (DKLY…HPME), 566 to 609 (GTIY…DYAG), 610 to 652 (RRMY…FEDS), and 653 to 693 (LYWT…LHPQ). A glycan (N-linked (GlcNAc...) asparagine) is linked at N498. Residues 698–737 (GKNRCGDNNGGCTHLCLPSGQNYTCACPTGFRKISSHACA) form the EGF-like 3 domain. 3 cysteine pairs are disulfide-bonded: C702-C713, C709-C722, and C724-C736. N719 carries N-linked (GlcNAc...) asparagine glycosylation. LDL-receptor class B repeat units follow at residues 785–827 (DHVY…DWVT), 828–870 (NKLY…EPMG), 871–914 (GYMY…DYGS), 915–956 (QRLY…LYGE), and 957–998 (RIYW…FHRR). The N-linked (GlcNAc...) asparagine glycan is linked to N901. N-linked (GlcNAc...) asparagine glycosylation is present at N1077. LDL-receptor class B repeat units follow at residues 1093 to 1135 (GKVY…DAIG), 1136 to 1178 (RKVY…YHEM), 1179 to 1222 (GFMY…DKAS), 1223 to 1263 (SQLL…LLDS), 1264 to 1306 (YIYW…DRAQ), 1397 to 1439 (GKVY…DWVA), 1440 to 1482 (RNLY…FPRK), 1483 to 1526 (GYLF…DYDT), 1527 to 1568 (RRIY…QDRW), and 1569 to 1610 (IYWT…SPQR). Residues N1415 and N1467 are each glycosylated (N-linked (GlcNAc...) asparagine). The disordered stretch occupies residues 1659–1686 (PRATGMSEKSPVLPNTPPTTLYSSTTRT). Residues 1676–1686 (PTTLYSSTTRT) show a composition bias toward low complexity. Residues 1726-1746 (YAIGGLLSILLILVVIAALML) form a helical membrane-spanning segment. At 1747–1905 (YRHKKSKFTD…ERKLSSESQV (159 aa)) the chain is on the cytoplasmic side. The Endocytosis signal signature appears at 1766-1769 (NPSY). The segment at 1852 to 1905 (ASSGSLDDTETEQLLQEEQSECSSVHTAATPERRGSLPDTGWKHERKLSSESQV) is disordered. Over residues 1882–1905 (PERRGSLPDTGWKHERKLSSESQV) the composition is skewed to basic and acidic residues.

Belongs to the LDLR family. In terms of assembly, homooligomer. Interacts with MUSK; the heterodimer forms an AGRIN receptor complex that binds AGRIN resulting in activation of MUSK. Interacts (via the extracellular domain) with SOST; the interaction facilitates the inhibition of Wnt signaling. Interacts with MESD; the interaction promotes glycosylation of LRP4 and its cell-surface expression. As to expression, expressed in bone; present in osteoblasts and osteocytes. No expression is observed in osteoclast. Expressed in several regions of the brain.

It is found in the cell membrane. Functionally, mediates SOST-dependent inhibition of bone formation. Functions as a specific facilitator of SOST-mediated inhibition of Wnt signaling. Plays a key role in the formation and the maintenance of the neuromuscular junction (NMJ), the synapse between motor neuron and skeletal muscle. Directly binds AGRIN and recruits it to the MUSK signaling complex. Mediates the AGRIN-induced phosphorylation of MUSK, the kinase of the complex. The activation of MUSK in myotubes induces the formation of NMJ by regulating different processes including the transcription of specific genes and the clustering of AChR in the postsynaptic membrane. Alternatively, may be involved in the negative regulation of the canonical Wnt signaling pathway, being able to antagonize the LRP6-mediated activation of this pathway. More generally, has been proposed to function as a cell surface endocytic receptor binding and internalizing extracellular ligands for degradation by lysosomes. May play an essential role in the process of digit differentiation. This chain is Low-density lipoprotein receptor-related protein 4 (LRP4), found in Homo sapiens (Human).